The sequence spans 392 residues: DNA replication and repair protein RecF (392 aa).

30–37 lines the ATP pocket; it reads GPNAAGKT.

The protein belongs to the RecF family.

The protein localises to the cytoplasm. Functionally, the RecF protein is involved in DNA metabolism; it is required for DNA replication and normal SOS inducibility. RecF binds preferentially to single-stranded, linear DNA. It also seems to bind ATP. This Chloroflexus aurantiacus (strain ATCC 29364 / DSM 637 / Y-400-fl) protein is DNA replication and repair protein RecF.